Reading from the N-terminus, the 530-residue chain is Autoinducer-2 kinase (530 aa).

Belongs to the FGGY kinase family.

Its subcellular location is the cytoplasm. It carries out the reaction (S)-4,5-dihydroxypentane-2,3-dione + ATP = (2S)-2-hydroxy-3,4-dioxopentyl phosphate + ADP + H(+). In terms of biological role, catalyzes the phosphorylation of autoinducer-2 (AI-2) to phospho-AI-2, which subsequently inactivates the transcriptional regulator LsrR and leads to the transcription of the lsr operon. Phosphorylates the ring-open form of (S)-4,5-dihydroxypentane-2,3-dione (DPD), which is the precursor to all AI-2 signaling molecules, at the C5 position. In Yersinia pseudotuberculosis serotype O:3 (strain YPIII), this protein is Autoinducer-2 kinase.